Reading from the N-terminus, the 332-residue chain is 2,3-diketo-L-gulonate reductase (332 aa).

Catalysis depends on His-44, which acts as the Proton donor. NAD(+)-binding positions include 168–174, 224–225, and 304–306; these read ITMVDMS, WK, and GHE.

This sequence belongs to the LDH2/MDH2 oxidoreductase family. DlgD subfamily. In terms of assembly, homodimer.

It localises to the cytoplasm. It catalyses the reaction 3-dehydro-L-gulonate + NAD(+) = 2,3-dioxo-L-gulonate + NADH + H(+). It carries out the reaction 3-dehydro-L-gulonate + NADP(+) = 2,3-dioxo-L-gulonate + NADPH + H(+). Catalyzes the reduction of 2,3-diketo-L-gulonate in the presence of NADH, to form 3-keto-L-gulonate. This chain is 2,3-diketo-L-gulonate reductase, found in Salmonella paratyphi C (strain RKS4594).